A 304-amino-acid polypeptide reads, in one-letter code: Protease HtpX homolog 1 (304 aa).

2 helical membrane-spanning segments follow: residues 17–37 and 39–59; these read VTLFLLGLLYVGFVAALIALL and SWVLVVVIVALVFGAQYWFSD. H140 lines the Zn(2+) pocket. E141 is an active-site residue. H144 lines the Zn(2+) pocket. A run of 2 helical transmembrane segments spans residues 151 to 171 and 186 to 206; these read AVITVASFLGVIAGLIVRFAF and AVLAVVMGVSAAVYALSFLLI. Residue E214 participates in Zn(2+) binding.

Belongs to the peptidase M48B family. The cofactor is Zn(2+).

The protein resides in the cell membrane. The protein is Protease HtpX homolog 1 of Streptomyces coelicolor (strain ATCC BAA-471 / A3(2) / M145).